The following is a 268-amino-acid chain: Speedy protein E4A (268 aa).

Disordered stretches follow at residues 1–26 (MGEG…LGFV) and 43–97 (LCSE…LDSE). Polar residues predominate over residues 43 to 52 (LCSEEQSPQP). The speedy/Ringo box; Required for CDK-binding stretch occupies residues 134 to 265 (PEHHKVFTKL…DLWVWARDRT (132 aa)).

It belongs to the Speedy/Ringo family. In terms of assembly, interacts with CDK1. Does not interact with CDK2 in vivo. As to expression, testis-specific.

The protein localises to the nucleus. Its function is as follows. Promotes progression through the cell cycle via binding and activation of CDK1. This is Speedy protein E4A from Mus musculus (Mouse).